We begin with the raw amino-acid sequence, 479 residues long: Anaerobic nitric oxide reductase flavorubredoxin (479 aa).

Residues 30 to 210 (LRGSSYNSYL…PFSRLVTPKI (181 aa)) are zinc metallo-hydrolase. The Fe cation site is built by histidine 79, glutamate 81, aspartate 83, histidine 147, aspartate 166, and histidine 227. The Flavodoxin-like domain occupies 254–393 (ITIVYDTMSN…LCREHGREIA (140 aa)). FMN contacts are provided by residues 260–264 (TMSNN) and 342–369 (AFGS…EMSL). The Rubredoxin-like domain maps to 423-474 (GPRMQCSVCQWIYDPAKGEPMQDVAPGTPWSEVPDNFLCPECSLGKDVFDEL). Cysteine 428, cysteine 431, cysteine 461, and cysteine 464 together coordinate Fe cation.

In the N-terminal section; belongs to the zinc metallo-hydrolase group 3 family. In terms of assembly, homotetramer. The cofactor is Fe cation. It depends on FMN as a cofactor.

Its subcellular location is the cytoplasm. The protein operates within nitrogen metabolism; nitric oxide reduction. Anaerobic nitric oxide reductase; uses NADH to detoxify nitric oxide (NO), protecting several 4Fe-4S NO-sensitive enzymes. Has at least 2 reductase partners, only one of which (NorW, flavorubredoxin reductase) has been identified. NO probably binds to the di-iron center; electrons enter from the NorW at rubredoxin and are transferred sequentially to the FMN center and the di-iron center. Also able to function as an aerobic oxygen reductase. The protein is Anaerobic nitric oxide reductase flavorubredoxin of Escherichia coli (strain UTI89 / UPEC).